The chain runs to 320 residues: ATP-dependent 6-phosphofructokinase (320 aa).

ATP is bound at residue glycine 12. Residues 22-26 (RGVVR) and 55-60 (RYSVSD) contribute to the ADP site. ATP is bound by residues 73-74 (RF) and 103-106 (GDGS). Aspartate 104 serves as a coordination point for Mg(2+). Residue 126-128 (TID) participates in substrate binding. Aspartate 128 acts as the Proton acceptor in catalysis. Arginine 155 is an ADP binding site. Residues arginine 163 and 170-172 (MGR) each bind substrate. Residues 186–188 (GCE), lysine 212, and 214–216 (KKH) contribute to the ADP site. Substrate-binding positions include glutamate 223, arginine 244, and 250–253 (HIQR).

It belongs to the phosphofructokinase type A (PFKA) family. ATP-dependent PFK group I subfamily. Prokaryotic clade 'B1' sub-subfamily. As to quaternary structure, homotetramer. The cofactor is Mg(2+).

The protein localises to the cytoplasm. The catalysed reaction is beta-D-fructose 6-phosphate + ATP = beta-D-fructose 1,6-bisphosphate + ADP + H(+). It participates in carbohydrate degradation; glycolysis; D-glyceraldehyde 3-phosphate and glycerone phosphate from D-glucose: step 3/4. Allosterically activated by ADP and other diphosphonucleosides, and allosterically inhibited by phosphoenolpyruvate. Its function is as follows. Catalyzes the phosphorylation of D-fructose 6-phosphate to fructose 1,6-bisphosphate by ATP, the first committing step of glycolysis. The protein is ATP-dependent 6-phosphofructokinase of Buchnera aphidicola subsp. Baizongia pistaciae (strain Bp).